Reading from the N-terminus, the 117-residue chain is Holo-[acyl-carrier-protein] synthase (117 aa).

Residues aspartate 8 and glutamate 58 each coordinate Mg(2+).

It belongs to the P-Pant transferase superfamily. AcpS family. Mg(2+) is required as a cofactor.

Its subcellular location is the cytoplasm. It catalyses the reaction apo-[ACP] + CoA = holo-[ACP] + adenosine 3',5'-bisphosphate + H(+). Functionally, transfers the 4'-phosphopantetheine moiety from coenzyme A to a Ser of acyl-carrier-protein. This chain is Holo-[acyl-carrier-protein] synthase, found in Enterococcus faecalis (strain ATCC 700802 / V583).